The sequence spans 185 residues: Ribosome-recycling factor (185 aa).

This sequence belongs to the RRF family.

It is found in the cytoplasm. Responsible for the release of ribosomes from messenger RNA at the termination of protein biosynthesis. May increase the efficiency of translation by recycling ribosomes from one round of translation to another. The sequence is that of Ribosome-recycling factor from Wolbachia pipientis wMel.